The sequence spans 423 residues: Polyglutamylase complex subunit TTLL1 (423 aa).

Positions 1 to 367 (MAGKVKWVTD…NGEIPDCKWN (367 aa)) constitute a TTL domain. ATP contacts are provided by residues Lys138, 144 to 145 (QG), 181 to 184 (SLYI), and 194 to 196 (KFD). Position 144 (Gln144) interacts with a protein. Position 220 (Arg220) interacts with L-glutamate. An ATP-binding site is contributed by 241–242 (TN). Lys259 is an L-glutamate binding site. Mg(2+)-binding residues include Asp313, Glu326, and Asn328. Lys344 serves as a coordination point for L-glutamate. Positions 391–423 (GADRELRSRQGQSLGPRAGRSRDSGRAVLTTWK) are disordered.

This sequence belongs to the tubulin polyglutamylase family. Part of the neuronal tubulin polyglutamylase complex which contains TPGS1, TPGS2, TTLL1, LRRC49 and NICN1. Interacts with PCM1, CSTPP1 and LRRC49. It depends on Mg(2+) as a cofactor. In terms of tissue distribution, expressed in a wide range of tissues. Has a stronger expression in heart, brain and testis.

The protein resides in the cytoplasm. It localises to the cytoskeleton. Its subcellular location is the cilium basal body. It is found in the cilium axoneme. The protein localises to the cell projection. The protein resides in the cilium. It localises to the flagellum. The catalysed reaction is (L-glutamyl)(n)-gamma-L-glutamyl-L-glutamyl-[protein] + L-glutamate + ATP = (L-glutamyl)(n+1)-gamma-L-glutamyl-L-glutamyl-[protein] + ADP + phosphate + H(+). In terms of biological role, catalytic subunit of a polyglutamylase complex which modifies tubulin, generating side chains of glutamate on the gamma-carboxyl group of specific glutamate residues within the C-terminal tail of tubulin. Probably involved in the side-chain elongation step of the polyglutamylation reaction rather than the initiation step. Modifies both alpha- and beta-tubulins with a preference for the alpha-tail. Unlike most polyglutamylases of the tubulin--tyrosine ligase family, only displays a catalytic activity when in complex with other proteins as it is most likely lacking domains important for autonomous activity. Part of the neuronal tubulin polyglutamylase complex. Mediates cilia and flagella polyglutamylation which is essential for their biogenesis and motility. Involved in respiratory motile cilia function through the regulation of beating asymmetry. Essential for sperm flagella biogenesis, motility and male fertility. Involved in KLF4 glutamylation which impedes its ubiquitination, thereby leading to somatic cell reprogramming, pluripotency maintenance and embryogenesis. The sequence is that of Polyglutamylase complex subunit TTLL1 from Homo sapiens (Human).